Reading from the N-terminus, the 219-residue chain is Translation initiation factor IF-3 (219 aa).

The protein belongs to the IF-3 family. Monomer.

The protein resides in the cytoplasm. Functionally, IF-3 binds to the 30S ribosomal subunit and shifts the equilibrium between 70S ribosomes and their 50S and 30S subunits in favor of the free subunits, thus enhancing the availability of 30S subunits on which protein synthesis initiation begins. In Prochlorococcus marinus (strain MIT 9303), this protein is Translation initiation factor IF-3.